A 223-amino-acid chain; its full sequence is Cytidylate kinase (223 aa).

10 to 18 (GPAGTGKSS) lines the ATP pocket.

It belongs to the cytidylate kinase family. Type 1 subfamily.

The protein resides in the cytoplasm. It catalyses the reaction CMP + ATP = CDP + ADP. It carries out the reaction dCMP + ATP = dCDP + ADP. This Mycobacterium leprae (strain Br4923) protein is Cytidylate kinase.